The chain runs to 344 residues: Phosphate acyltransferase (344 aa).

Belongs to the PlsX family. In terms of assembly, homodimer. Probably interacts with PlsY.

It is found in the cytoplasm. The catalysed reaction is a fatty acyl-[ACP] + phosphate = an acyl phosphate + holo-[ACP]. It functions in the pathway lipid metabolism; phospholipid metabolism. Catalyzes the reversible formation of acyl-phosphate (acyl-PO(4)) from acyl-[acyl-carrier-protein] (acyl-ACP). This enzyme utilizes acyl-ACP as fatty acyl donor, but not acyl-CoA. The polypeptide is Phosphate acyltransferase (Actinobacillus pleuropneumoniae serotype 5b (strain L20)).